Consider the following 535-residue polypeptide: Genetic interactor of prohibitins 3, mitochondrial (535 aa).

The transit peptide at 1 to 38 (MLPVSRLCVRSSLRKLVFVRFVSCTSCGVTLQNNNVRG) directs the protein to the mitochondrion. Positions 111 to 283 (MQEVYRHVPA…INDLPGYSTN (173 aa)) constitute a CP-type G domain.

Belongs to the TRAFAC class YlqF/YawG GTPase family. GEP3 subfamily.

The protein resides in the mitochondrion. Its function is as follows. May be involved in the mitochondrial lipid metabolism. The chain is Genetic interactor of prohibitins 3, mitochondrial (GEP3) from Lachancea thermotolerans (strain ATCC 56472 / CBS 6340 / NRRL Y-8284) (Yeast).